The following is a 354-amino-acid chain: MTEATQAQPAVPRLTSLSHGGGCGCKIAPGVLSELLKRATPPALFPDLLVGTETSDDAAVYRLNDEQAIVATTDFFMPIVDDPFDFGRIAATNALSDVYAMGGKPILALALVGMPINVLPHETIAAVLRGGESVCADAGIPVAGGHSIDSVEPIYGLAAIGVVHPSRVKRNAAARAGDVLVLGKPLGVGVLSAALKKNQLDADGYAQMVATTTKLNRPGAELAALPGVHALTDVTGFGLLGHTLELARGAQLTARVHYASLPWLAGVETFVADGVFTGASGRNWAAYGTDVRLADGLPPVAQALLTDPQTSGGLLVACAPEAVDDVLACFRADGFDRAAVIGEMVDGPARVDVA.

Cys23 is a catalytic residue. ATP-binding positions include Lys26 and 54-56 (TSD). Asp57 is a Mg(2+) binding site. Residues Asp74, Asp97, and 145-147 (GHS) contribute to the ATP site. Asp97 is a Mg(2+) binding site. Mg(2+) is bound at residue Asp233.

Belongs to the selenophosphate synthase 1 family. Class I subfamily. Homodimer. Mg(2+) is required as a cofactor.

It catalyses the reaction hydrogenselenide + ATP + H2O = selenophosphate + AMP + phosphate + 2 H(+). Functionally, synthesizes selenophosphate from selenide and ATP. In Burkholderia orbicola (strain MC0-3), this protein is Selenide, water dikinase.